The primary structure comprises 242 residues: Tryptophan synthase alpha chain (242 aa).

Catalysis depends on proton acceptor residues Glu-32 and Asp-43.

The protein belongs to the TrpA family. In terms of assembly, tetramer of two alpha and two beta chains.

Its subcellular location is the plastid. The protein resides in the chloroplast. The catalysed reaction is (1S,2R)-1-C-(indol-3-yl)glycerol 3-phosphate + L-serine = D-glyceraldehyde 3-phosphate + L-tryptophan + H2O. It functions in the pathway amino-acid biosynthesis; L-tryptophan biosynthesis; L-tryptophan from chorismate: step 5/5. Its function is as follows. The alpha subunit is responsible for the aldol cleavage of indoleglycerol phosphate to indole and glyceraldehyde 3-phosphate. This Cyanidium caldarium (Red alga) protein is Tryptophan synthase alpha chain.